A 122-amino-acid polypeptide reads, in one-letter code: Large ribosomal subunit protein uL18 (122 aa).

The protein belongs to the universal ribosomal protein uL18 family. In terms of assembly, part of the 50S ribosomal subunit; part of the 5S rRNA/L5/L18/L25 subcomplex. Contacts the 5S and 23S rRNAs.

Its function is as follows. This is one of the proteins that bind and probably mediate the attachment of the 5S RNA into the large ribosomal subunit, where it forms part of the central protuberance. This chain is Large ribosomal subunit protein uL18, found in Heliobacterium modesticaldum (strain ATCC 51547 / Ice1).